The chain runs to 449 residues: Trigger factor (449 aa).

The region spanning G162 to P247 is the PPIase FKBP-type domain. The segment covering A427–K438 has biased composition (basic residues). Residues A427–K449 are disordered. Over residues S439–K449 the composition is skewed to basic and acidic residues.

This sequence belongs to the FKBP-type PPIase family. Tig subfamily.

The protein resides in the cytoplasm. The catalysed reaction is [protein]-peptidylproline (omega=180) = [protein]-peptidylproline (omega=0). Involved in protein export. Acts as a chaperone by maintaining the newly synthesized protein in an open conformation. Functions as a peptidyl-prolyl cis-trans isomerase. The protein is Trigger factor of Lactobacillus gasseri (strain ATCC 33323 / DSM 20243 / BCRC 14619 / CIP 102991 / JCM 1131 / KCTC 3163 / NCIMB 11718 / NCTC 13722 / AM63).